A 731-amino-acid chain; its full sequence is MSSSLIFKLFFFSLFFSNRLASRLDSDDDGKNIYIVYMGRKLEDPDSAHLHHRAMLEQVVGSTFAPESVLHTYKRSFNGFAVKLTEEEAEKIASMEGVVSVFLNEMNELHTTRSWDFLGFPLTVPRRSQVESNIVVGVLDTGIWPESPSFDDEGFSPPPPKWKGTCETSNNFRCNRKIIGARSYHIGRPISPGDVNGPRDTNGHGTHTASTAAGGLVSQANLYGLGLGTARGGVPLARIAAYKVCWNDGCSDTDILAAYDDAIADGVDIISLSVGGANPRHYFVDAIAIGSFHAVERGILTSNSAGNGGPNFFTTASLSPWLLSVAASTMDRKFVTQVQIGNGQSFQGVSINTFDNQYYPLVSGRDIPNTGFDKSTSRFCTDKSVNPNLLKGKIVVCEASFGPHEFFKSLDGAAGVLMTSNTRDYADSYPLPSSVLDPNDLLATLRYIYSIRSPGATIFKSTTILNASAPVVVSFSSRGPNRATKDVIKPDISGPGVEILAAWPSVAPVGGIRRNTLFNIISGTSMSCPHITGIATYVKTYNPTWSPAAIKSALMTTASPMNARFNPQAEFAYGSGHVNPLKAVRPGLVYDANESDYVKFLCGQGYNTQAVRRITGDYSACTSGNTGRVWDLNYPSFGLSVSPSQTFNQYFNRTLTSVAPQASTYRAMISAPQGLTISVNPNVLSFNGLGDRKSFTLTVRGSIKGFVVSASLVWSDGVHYVRSPITITSLV.

The N-terminal stretch at 1-22 (MSSSLIFKLFFFSLFFSNRLAS) is a signal peptide. Positions 23 to 110 (RLDSDDDGKN…VFLNEMNELH (88 aa)) are cleaved as a propeptide — activation peptide. Positions 34–110 (YIVYMGRKLE…VFLNEMNELH (77 aa)) constitute an Inhibitor I9 domain. The 471-residue stretch at 114–584 (SWDFLGFPLT…SGHVNPLKAV (471 aa)) folds into the Peptidase S8 domain. The active-site Charge relay system is the Asp140. Cys166 and Cys174 are joined by a disulfide. His204 functions as the Charge relay system in the catalytic mechanism. 2 disulfide bridges follow: Cys245-Cys250 and Cys380-Cys397. Asn466 carries an N-linked (GlcNAc...) asparagine glycan. Ser525 acts as the Charge relay system in catalysis. Positions 616-731 (GDYSACTSGN…RSPITITSLV (116 aa)) are excised as a propeptide. Asn652 carries N-linked (GlcNAc...) asparagine glycosylation.

It belongs to the peptidase S8 family. As to quaternary structure, monomer and dimer. In terms of processing, the C-terminal propeptide is autocleaved. As to expression, specifically expressed in fruits. Expressed in sarcocarp (at protein level).

It localises to the secreted. The enzyme catalyses Hydrolysis of proteins with broad specificity.. The chain is Cucumisin from Cucumis melo (Muskmelon).